The following is a 448-amino-acid chain: C4-dicarboxylate transport protein (448 aa).

Transmembrane regions (helical) follow at residues 22–42, 55–75, 90–110, 137–157, 159–179, 199–219, and 232–252; these read FQVV…PAFA, LVKM…IAGM, TYFL…AHVV, ELSL…SAFV, GNIL…ALVG, LVHM…AFTI, and WLVG…LGIV. The tract at residues 428-448 is disordered; that stretch reads RAPPLQAPVPPPDAVAPVSAR. Pro residues predominate over residues 432–441; that stretch reads LQAPVPPPDA.

The protein belongs to the dicarboxylate/amino acid:cation symporter (DAACS) (TC 2.A.23) family.

The protein localises to the cell inner membrane. Responsible for the transport of dicarboxylates such as succinate, fumarate, and malate from the periplasm across the membrane. The protein is C4-dicarboxylate transport protein of Xanthomonas campestris pv. campestris (strain 8004).